The primary structure comprises 253 residues: 5'-nucleotidase SurE (253 aa).

4 residues coordinate a divalent metal cation: aspartate 8, aspartate 9, serine 39, and asparagine 91.

The protein belongs to the SurE nucleotidase family. Requires a divalent metal cation as cofactor.

Its subcellular location is the cytoplasm. It carries out the reaction a ribonucleoside 5'-phosphate + H2O = a ribonucleoside + phosphate. In terms of biological role, nucleotidase that shows phosphatase activity on nucleoside 5'-monophosphates. This chain is 5'-nucleotidase SurE, found in Leptothrix cholodnii (strain ATCC 51168 / LMG 8142 / SP-6) (Leptothrix discophora (strain SP-6)).